The primary structure comprises 409 residues: Tryptophan synthase beta chain (409 aa).

Lys-95 carries the N6-(pyridoxal phosphate)lysine modification.

The protein belongs to the TrpB family. Tetramer of two alpha and two beta chains. Pyridoxal 5'-phosphate is required as a cofactor.

It catalyses the reaction (1S,2R)-1-C-(indol-3-yl)glycerol 3-phosphate + L-serine = D-glyceraldehyde 3-phosphate + L-tryptophan + H2O. It participates in amino-acid biosynthesis; L-tryptophan biosynthesis; L-tryptophan from chorismate: step 5/5. The beta subunit is responsible for the synthesis of L-tryptophan from indole and L-serine. The protein is Tryptophan synthase beta chain of Pseudomonas syringae pv. tomato (strain ATCC BAA-871 / DC3000).